The chain runs to 568 residues: 3-(3-hydroxy-phenyl)propionate/3-hydroxycinnamic acid hydroxylase (568 aa).

Residues 13–42 (DVVI…IVEE) and 278–288 (FRKGRMFLAGD) each bind FAD.

Belongs to the PheA/TfdB FAD monooxygenase family. FAD is required as a cofactor.

It carries out the reaction 3-(3-hydroxyphenyl)propanoate + NADH + O2 + H(+) = 3-(2,3-dihydroxyphenyl)propanoate + NAD(+) + H2O. The enzyme catalyses (2E)-3-(3-hydroxyphenyl)prop-2-enoate + NADH + O2 + H(+) = (2E)-3-(2,3-dihydroxyphenyl)prop-2-enoate + NAD(+) + H2O. It functions in the pathway aromatic compound metabolism; 3-phenylpropanoate degradation. Its function is as follows. Catalyzes the insertion of one atom of molecular oxygen into position 2 of the phenyl ring of 3-(3-hydroxyphenyl)propionate (3-HPP) and hydroxycinnamic acid (3HCI). This Mycobacterium sp. (strain JLS) protein is 3-(3-hydroxy-phenyl)propionate/3-hydroxycinnamic acid hydroxylase.